The sequence spans 390 residues: Galactokinase (390 aa).

Residue 34 to 37 (EHTD) participates in substrate binding. Residues serine 68 and 122-128 (GSGLSSS) contribute to the ATP site. Positions 128 and 160 each coordinate Mg(2+). Aspartate 172 serves as the catalytic Proton acceptor. Residue tyrosine 221 coordinates substrate.

The protein belongs to the GHMP kinase family. GalK subfamily.

It localises to the cytoplasm. The enzyme catalyses alpha-D-galactose + ATP = alpha-D-galactose 1-phosphate + ADP + H(+). It participates in carbohydrate metabolism; galactose metabolism. Catalyzes the transfer of the gamma-phosphate of ATP to D-galactose to form alpha-D-galactose-1-phosphate (Gal-1-P). This chain is Galactokinase, found in Chloroflexus aurantiacus (strain ATCC 29366 / DSM 635 / J-10-fl).